Consider the following 159-residue polypeptide: Ribosome maturation factor RimP (159 aa).

It belongs to the RimP family.

It localises to the cytoplasm. Required for maturation of 30S ribosomal subunits. In Streptococcus agalactiae serotype III (strain NEM316), this protein is Ribosome maturation factor RimP.